We begin with the raw amino-acid sequence, 263 residues long: Thiamine thiazole synthase (263 aa).

NAD(+) is bound by residues Ser-43, 62–63 (ER), Gly-70, Val-134, and 160–162 (HID). Positions 162 and 177 each coordinate Fe cation. Residues Ser-180 and Met-227 each contribute to the NAD(+) site. Arg-237 provides a ligand contact to glycine.

Belongs to the THI4 family. In terms of assembly, homooctamer; tetramer of dimers. Requires Fe(2+) as cofactor.

It carries out the reaction hydrogen sulfide + glycine + NAD(+) = ADP-5-ethyl-4-methylthiazole-2-carboxylate + nicotinamide + 3 H2O + H(+). Its pathway is cofactor biosynthesis; thiamine diphosphate biosynthesis. Its function is as follows. Involved in the biosynthesis of the thiazole moiety of thiamine. Catalyzes the conversion of NAD and glycine to adenosine diphosphate 5-(2-hydroxyethyl)-4-methylthiazole-2-carboxylate (ADT), an adenylated thiazole intermediate, using free sulfide as a source of sulfur. The chain is Thiamine thiazole synthase from Methanococcus aeolicus (strain ATCC BAA-1280 / DSM 17508 / OCM 812 / Nankai-3).